The following is a 795-amino-acid chain: Protein translocase subunit SecA 2 (795 aa).

ATP-binding positions include glutamine 84, 102–106 (GEGKT), and aspartate 496.

The protein belongs to the SecA family. Monomer and homodimer. Part of the essential Sec protein translocation apparatus which comprises SecA, SecYEG and auxiliary proteins SecDF. Other proteins may also be involved.

The protein localises to the cell membrane. The protein resides in the cytoplasm. The enzyme catalyses ATP + H2O + cellular proteinSide 1 = ADP + phosphate + cellular proteinSide 2.. Functionally, part of the Sec protein translocase complex. Interacts with the SecYEG preprotein conducting channel. Has a central role in coupling the hydrolysis of ATP to the transfer of proteins into and across the cell membrane, serving as an ATP-driven molecular motor driving the stepwise translocation of polypeptide chains across the membrane. In Streptococcus agalactiae serotype III (strain NEM316), this protein is Protein translocase subunit SecA 2.